The sequence spans 640 residues: 1-deoxy-D-xylulose-5-phosphate synthase (640 aa).

Thiamine diphosphate contacts are provided by residues H77 and 118–120; that span reads AHA. D149 contributes to the Mg(2+) binding site. Thiamine diphosphate contacts are provided by residues 150–151, N178, Y287, and E369; that span reads GS. A Mg(2+)-binding site is contributed by N178.

Belongs to the transketolase family. DXPS subfamily. Homodimer. Mg(2+) serves as cofactor. Requires thiamine diphosphate as cofactor.

The enzyme catalyses D-glyceraldehyde 3-phosphate + pyruvate + H(+) = 1-deoxy-D-xylulose 5-phosphate + CO2. Its pathway is metabolic intermediate biosynthesis; 1-deoxy-D-xylulose 5-phosphate biosynthesis; 1-deoxy-D-xylulose 5-phosphate from D-glyceraldehyde 3-phosphate and pyruvate: step 1/1. In terms of biological role, catalyzes the acyloin condensation reaction between C atoms 2 and 3 of pyruvate and glyceraldehyde 3-phosphate to yield 1-deoxy-D-xylulose-5-phosphate (DXP). The chain is 1-deoxy-D-xylulose-5-phosphate synthase from Caulobacter vibrioides (strain NA1000 / CB15N) (Caulobacter crescentus).